A 172-amino-acid chain; its full sequence is Shikimate kinase (172 aa).

Residue 11–16 (GTGKTA) participates in ATP binding. Threonine 15 provides a ligand contact to Mg(2+). Aspartate 33, arginine 57, and glycine 79 together coordinate substrate. Residue arginine 117 participates in ATP binding. Residue arginine 136 coordinates substrate.

This sequence belongs to the shikimate kinase family. Monomer. The cofactor is Mg(2+).

The protein localises to the cytoplasm. The enzyme catalyses shikimate + ATP = 3-phosphoshikimate + ADP + H(+). It functions in the pathway metabolic intermediate biosynthesis; chorismate biosynthesis; chorismate from D-erythrose 4-phosphate and phosphoenolpyruvate: step 5/7. In terms of biological role, catalyzes the specific phosphorylation of the 3-hydroxyl group of shikimic acid using ATP as a cosubstrate. The polypeptide is Shikimate kinase (Pelotomaculum thermopropionicum (strain DSM 13744 / JCM 10971 / SI)).